Here is a 479-residue protein sequence, read N- to C-terminus: Glutamyl-tRNA(Gln) amidotransferase subunit A (479 aa).

Active-site charge relay system residues include Lys-71 and Ser-146. The active-site Acyl-ester intermediate is Ser-170.

It belongs to the amidase family. GatA subfamily. Heterotrimer of A, B and C subunits.

It catalyses the reaction L-glutamyl-tRNA(Gln) + L-glutamine + ATP + H2O = L-glutaminyl-tRNA(Gln) + L-glutamate + ADP + phosphate + H(+). Its function is as follows. Allows the formation of correctly charged Gln-tRNA(Gln) through the transamidation of misacylated Glu-tRNA(Gln) in organisms which lack glutaminyl-tRNA synthetase. The reaction takes place in the presence of glutamine and ATP through an activated gamma-phospho-Glu-tRNA(Gln). The protein is Glutamyl-tRNA(Gln) amidotransferase subunit A of Lactobacillus acidophilus (strain ATCC 700396 / NCK56 / N2 / NCFM).